The sequence spans 536 residues: Beta-hexosaminidase subunit beta (536 aa).

Positions 1–31 (MPQSPRSAPGLLLLQALVSLVSLALVAPARL) are cleaved as a signal peptide. N-linked (GlcNAc...) asparagine glycosylation occurs at Asn-63. A disulfide bond links Cys-70 and Cys-116. Residues Asn-169 and Asn-306 are each glycosylated (N-linked (GlcNAc...) asparagine). Cystine bridges form between Cys-288-Cys-339 and Cys-513-Cys-530. Catalysis depends on Glu-334, which acts as the Proton donor.

Belongs to the glycosyl hydrolase 20 family. As to quaternary structure, there are 3 forms of beta-hexosaminidase: hexosaminidase A is a heterodimer composed of one subunit alpha and one subunit beta (chain A and B); hexosaminidase B is a homodimer of two beta subunits (two chains A and B); hexosaminidase S is a homodimer of two alpha subunits. The composition of the dimer (isozyme A versus isozyme S) has a significant effect on the substrate specificity of the alpha subunit active site.

It is found in the lysosome. Its subcellular location is the cytoplasmic vesicle. The protein localises to the secretory vesicle. It localises to the cortical granule. It catalyses the reaction Hydrolysis of terminal non-reducing N-acetyl-D-hexosamine residues in N-acetyl-beta-D-hexosaminides.. The enzyme catalyses N-acetyl-beta-D-galactosaminyl-(1-&gt;4)-beta-D-3-sulfogalactosyl-(1-&gt;4)-beta-D-glucosyl-(1&lt;-&gt;1')-ceramide + H2O = a beta-D-3-sulfogalactosyl-(1-&gt;4)-beta-D-glucosyl-(1&lt;-&gt;1')-ceramide + N-acetyl-beta-D-galactosamine. The catalysed reaction is a ganglioside GM2 (d18:1(4E)) + H2O = a ganglioside GM3 (d18:1(4E)) + N-acetyl-beta-D-galactosamine. It carries out the reaction a ganglioside GM2 + H2O = a ganglioside GM3 + N-acetyl-beta-D-galactosamine. It catalyses the reaction beta-D-GalNAc-(1-&gt;4)-alpha-L-IdoA-(1-&gt;3)-beta-D-GalNAc-4-sulfate-(1-&gt;4)-alpha-L-IdoA-(1-&gt;3)-D-GalNAc-4-sulfate + H2O = alpha-L-IdoA-(1-&gt;3)-beta-D-GalNAc-4-sulfate-(1-&gt;4)-alpha-L-IdoA-(1-&gt;3)-D-GalNAc-4-sulfate + N-acetyl-D-galactosamine. The enzyme catalyses N-acetyl-beta-D-6-sulfogalactosaminyl-(1-&gt;4)-alpha-L-iduronyl-(1-&gt;3)-N-acetyl-D-6-sulfogalactosamine + H2O = alpha-L-iduronyl-(1-&gt;3)-N-acetyl-D-6-sulfogalactosamine + N-acetyl-D-6-sulfogalactosamine. Its activity is regulated as follows. Addition of GM2A stimulates the hydrolysis of sulfated glycosphingolipid SM2 and the ganglioside GM2. Hydrolyzes the non-reducing end N-acetyl-D-hexosamine and/or sulfated N-acetyl-D-hexosamine of glycoconjugates, such as the oligosaccharide moieties from proteins and neutral glycolipids, or from certain mucopolysaccharides. The isozyme B does not hydrolyze each of these substrates, however hydrolyzes efficiently neutral oligosaccharide. Only the isozyme A is responsible for the degradation of GM2 gangliosides in the presence of GM2A. During fertilization is responsible, at least in part, for the zona block to polyspermy. Present in the cortical granules of non-activated oocytes, is exocytosed during the cortical reaction in response to oocyte activation and inactivates the sperm galactosyltransferase-binding site, accounting for the block in sperm binding to the zona pellucida. The chain is Beta-hexosaminidase subunit beta from Mus musculus (Mouse).